Reading from the N-terminus, the 261-residue chain is Imidazole glycerol phosphate synthase subunit HisF (261 aa).

Active-site residues include aspartate 16 and aspartate 135.

The protein belongs to the HisA/HisF family. Heterodimer of HisH and HisF.

The protein resides in the cytoplasm. The enzyme catalyses 5-[(5-phospho-1-deoxy-D-ribulos-1-ylimino)methylamino]-1-(5-phospho-beta-D-ribosyl)imidazole-4-carboxamide + L-glutamine = D-erythro-1-(imidazol-4-yl)glycerol 3-phosphate + 5-amino-1-(5-phospho-beta-D-ribosyl)imidazole-4-carboxamide + L-glutamate + H(+). It functions in the pathway amino-acid biosynthesis; L-histidine biosynthesis; L-histidine from 5-phospho-alpha-D-ribose 1-diphosphate: step 5/9. Functionally, IGPS catalyzes the conversion of PRFAR and glutamine to IGP, AICAR and glutamate. The HisF subunit catalyzes the cyclization activity that produces IGP and AICAR from PRFAR using the ammonia provided by the HisH subunit. In Mycolicibacterium gilvum (strain PYR-GCK) (Mycobacterium gilvum (strain PYR-GCK)), this protein is Imidazole glycerol phosphate synthase subunit HisF.